A 78-amino-acid chain; its full sequence is Translation initiation factor IF-1 (78 aa).

One can recognise an S1-like domain in the interval 2–78 (SKNNLNETES…TQARITYRFK (77 aa)).

Belongs to the IF-1 family. In terms of assembly, component of the 30S ribosomal translation pre-initiation complex which assembles on the 30S ribosome in the order IF-2 and IF-3, IF-1 and N-formylmethionyl-tRNA(fMet); mRNA recruitment can occur at any time during PIC assembly.

The protein resides in the cytoplasm. In terms of biological role, one of the essential components for the initiation of protein synthesis. Stabilizes the binding of IF-2 and IF-3 on the 30S subunit to which N-formylmethionyl-tRNA(fMet) subsequently binds. Helps modulate mRNA selection, yielding the 30S pre-initiation complex (PIC). Upon addition of the 50S ribosomal subunit IF-1, IF-2 and IF-3 are released leaving the mature 70S translation initiation complex. This chain is Translation initiation factor IF-1, found in Aster yellows witches'-broom phytoplasma (strain AYWB).